The following is a 450-amino-acid chain: Transcription factor SCREAM2 (450 aa).

3 disordered regions span residues 1–47, 207–231, and 244–265; these read MNSD…NQND, RQSS…YERE, and GLNY…KGMP. Residues 209-220 show a composition bias toward low complexity; the sequence is SSSSKMCNSESS. Over residues 221 to 230 the composition is skewed to basic and acidic residues; sequence SEMRKSSYER. The region spanning 263 to 312 is the bHLH domain; it reads GMPAKNLMAERRRRKKLNDRLYMLRSVVPKISKMDRASILGDAIDYLKEL. The 73-residue stretch at 378–450 folds into the ACT domain; it reads NIHMFCGRRP…LDTAGYAGLV (73 aa).

Homodimer. Heterodimers with SPCH, MUTE, and FAMA. As to expression, expressed constitutively in roots, leaves, stems, and flowers. Broad expression within stomatal cell lineages of leaf epidermis, except in mature guard-cells.

The protein localises to the nucleus. In terms of biological role, mediates stomatal differentiation in the epidermis probably by controlling successive roles of SPCH, MUTE, and FAMA. Functions as a dimer with SPCH during stomatal initiation. In Arabidopsis thaliana (Mouse-ear cress), this protein is Transcription factor SCREAM2 (SCRM2).